The primary structure comprises 228 residues: UPF0758 protein CLK_2387 (228 aa).

The MPN domain maps to 106–228 (KISTPLDVSN…YVSMKEKGTI (123 aa)). H177, H179, and D190 together coordinate Zn(2+). Residues 177–190 (HNHPSGDPTPSKED) carry the JAMM motif motif.

Belongs to the UPF0758 family.

This is UPF0758 protein CLK_2387 from Clostridium botulinum (strain Loch Maree / Type A3).